Reading from the N-terminus, the 576-residue chain is MRRHMVTYAWQLLKKELGLYQLAMDIIIMIRVCKMFRQGLRGFREYQIIETAHWKHPIFSFWDKKMQSRVTFDTMDFIAEEGHFPPKAIQIMQKKPSWRTEDEIQAVCNILQVLDSYRNYAEPLQLLLAKVMRFERFGRRRVIIKKGQKGNSFYFIYLGTVAITKDEDGSSAFLDPHPKLLHKGSCFGEMDVLHASVRRSTIVCMEETEFLVVDREDFFANKLDQEVQKDAQYRFEFFRKMELFASWSDEKLWQLVAMAKIERFSYGQLISKDFGESPFIMFISKGSCEVLRLLDLGASPSYRRWIWQHLELIDGRPLKTHLSEYSPMERFKEFQIKSYPLQDFSSLKLPHLKKAWGLQGTSFSRKIRTSGDTLPKMLGPKIQSRPAQSIKCAMINIKPGELPKEAAVGAYVKVHTVEQGEILGLHQAFLPEGECDTRPLILMSLGNELIRIRKEIFYELIDNDDEMIKKLLKLNIAFPSDEDMCQKFLQQNSWNIFRKDLLQLLVEPCQSQLFTPNRPKKREIYNPKSVVLDLCSINKTTKPRYPIFMAPQKYLPPLRIVQAIKAPRYKIRELLA.

Residue 116-239 coordinates a nucleoside 3',5'-cyclic phosphate; it reads SYRNYAEPLQ…DAQYRFEFFR (124 aa).

The protein resides in the cytoplasm. It localises to the cytosol. Functionally, essential for male fertility. Plays an important role in spermatogenesis and regulates sperm motility by controlling the development of the flagellar bending of sperm. The polypeptide is Cyclic nucleotide-binding domain-containing protein 2 (CNBD2) (Homo sapiens (Human)).